The sequence spans 541 residues: Chaperonin GroEL, cyanelle (541 aa).

ATP-binding positions include 29 to 32, 86 to 90, Gly413, 479 to 481, and Asp495; these read TLGP, DGTTT, and NAA.

The protein belongs to the chaperonin (HSP60) family. As to quaternary structure, forms a cylinder of 14 subunits composed of two heptameric rings stacked back-to-back. Interacts with the co-chaperonin GroES.

It is found in the plastid. The protein localises to the cyanelle. The catalysed reaction is ATP + H2O + a folded polypeptide = ADP + phosphate + an unfolded polypeptide.. In terms of biological role, together with its co-chaperonin GroES, plays an essential role in assisting protein folding. The GroEL-GroES system forms a nano-cage that allows encapsulation of the non-native substrate proteins and provides a physical environment optimized to promote and accelerate protein folding. In Cyanophora paradoxa, this protein is Chaperonin GroEL, cyanelle.